The chain runs to 376 residues: Glutamate 5-kinase (376 aa).

Residue Lys-15 coordinates ATP. Positions 55, 142, and 154 each coordinate substrate. Residues 174 to 175 and 216 to 222 each bind ATP; these read TD and TGGMATK. The PUA domain occupies 281–359; the sequence is AGKVLVDAGA…AEIEQLLGYR (79 aa).

It belongs to the glutamate 5-kinase family.

The protein resides in the cytoplasm. The enzyme catalyses L-glutamate + ATP = L-glutamyl 5-phosphate + ADP. The protein operates within amino-acid biosynthesis; L-proline biosynthesis; L-glutamate 5-semialdehyde from L-glutamate: step 1/2. Catalyzes the transfer of a phosphate group to glutamate to form L-glutamate 5-phosphate. In Trichlorobacter lovleyi (strain ATCC BAA-1151 / DSM 17278 / SZ) (Geobacter lovleyi), this protein is Glutamate 5-kinase.